The following is a 728-amino-acid chain: Fatty acid oxidation complex subunit alpha (728 aa).

The interval 1–189 (MLYQSETIQV…KNGLIDAVVP (189 aa)) is enoyl-CoA hydratase/isomerase. Asp-296 is a substrate binding site. Residues 311 to 728 (TIPEYAAVLG…TIAVSTGKTA (418 aa)) are 3-hydroxyacyl-CoA dehydrogenase. NAD(+) contacts are provided by residues Met-324, Asp-343, 400–402 (VVE), Lys-407, and Ser-429. Residue His-450 is the For 3-hydroxyacyl-CoA dehydrogenase activity of the active site. NAD(+) is bound at residue Asn-453. Substrate contacts are provided by Asn-500 and Tyr-660.

This sequence in the N-terminal section; belongs to the enoyl-CoA hydratase/isomerase family. It in the C-terminal section; belongs to the 3-hydroxyacyl-CoA dehydrogenase family. As to quaternary structure, heterotetramer of two alpha chains (FadB) and two beta chains (FadA).

It catalyses the reaction a (3S)-3-hydroxyacyl-CoA + NAD(+) = a 3-oxoacyl-CoA + NADH + H(+). The enzyme catalyses a (3S)-3-hydroxyacyl-CoA = a (2E)-enoyl-CoA + H2O. It carries out the reaction a 4-saturated-(3S)-3-hydroxyacyl-CoA = a (3E)-enoyl-CoA + H2O. The catalysed reaction is (3S)-3-hydroxybutanoyl-CoA = (3R)-3-hydroxybutanoyl-CoA. It catalyses the reaction a (3Z)-enoyl-CoA = a 4-saturated (2E)-enoyl-CoA. The enzyme catalyses a (3E)-enoyl-CoA = a 4-saturated (2E)-enoyl-CoA. It functions in the pathway lipid metabolism; fatty acid beta-oxidation. Involved in the aerobic and anaerobic degradation of long-chain fatty acids via beta-oxidation cycle. Catalyzes the formation of 3-oxoacyl-CoA from enoyl-CoA via L-3-hydroxyacyl-CoA. It can also use D-3-hydroxyacyl-CoA and cis-3-enoyl-CoA as substrate. This Photorhabdus laumondii subsp. laumondii (strain DSM 15139 / CIP 105565 / TT01) (Photorhabdus luminescens subsp. laumondii) protein is Fatty acid oxidation complex subunit alpha.